The following is a 506-amino-acid chain: Cytochrome P450 monooxygenase atr2 (506 aa).

A helical transmembrane segment spans residues 18 to 38; the sequence is VFAGLVLASLLTTTYCIWNIF. Cysteine 451 provides a ligand contact to heme.

Belongs to the cytochrome P450 family. Heme is required as a cofactor.

It is found in the membrane. The catalysed reaction is 4-O-demethylbarbatate + reduced [NADPH--hemoprotein reductase] + O2 = proatranorin II + oxidized [NADPH--hemoprotein reductase] + H2O + H(+). It catalyses the reaction proatranorin II + reduced [NADPH--hemoprotein reductase] + O2 = proatranorin III + oxidized [NADPH--hemoprotein reductase] + 2 H2O + H(+). The enzyme catalyses proatranorin I + reduced [NADPH--hemoprotein reductase] + O2 = proatranorin IV + oxidized [NADPH--hemoprotein reductase] + H2O + H(+). It carries out the reaction proatranorin IV + reduced [NADPH--hemoprotein reductase] + O2 = atranorin + oxidized [NADPH--hemoprotein reductase] + 2 H2O + H(+). The protein operates within secondary metabolite biosynthesis; terpenoid biosynthesis. Functionally, cytochrome P450 monooxygenase; part of the gene cluster that mediates the biosynthesis of atranorin, a depside of polyketide origin that accumulates in the cortical or medullary layers of lichen thalli. Atr2 performs the oxidation at the C-9 position of 4-O-demethylbarbatic acid to yield proatranorin III via proatranorin II. Atr2 is also able to oxidize the atr3 product proatranorin I to produce the final compound atranorin. The first step in the pathway is performed by the non-reducing polyketide synthase atr1 that produces 4-O-demethylbarbatic acid composed of two 3-methylorsellinic acid (3MOA) moieties. The pathway continues with the actions of the cytochrome P450 monooygenase atr2 that catalizes the oxidation of c-9 and the O-methyltransferase atr3 that performs the methylation of the carboxyl group to yield atranorin, via the proatranorin II and III intermediates if atr2 acts first, or the proatranorin I intermediate if atr3 acts first. This Stereocaulon alpinum (Alpine snow lichen) protein is Cytochrome P450 monooxygenase atr2.